Here is a 193-residue protein sequence, read N- to C-terminus: Orotate phosphoribosyltransferase (193 aa).

A 5-phospho-alpha-D-ribose 1-diphosphate-binding site is contributed by 117–125 (EDVVTTGLS). Residues Thr-121 and Arg-149 each contribute to the orotate site.

Belongs to the purine/pyrimidine phosphoribosyltransferase family. PyrE subfamily. Homodimer. Mg(2+) serves as cofactor.

The catalysed reaction is orotidine 5'-phosphate + diphosphate = orotate + 5-phospho-alpha-D-ribose 1-diphosphate. Its pathway is pyrimidine metabolism; UMP biosynthesis via de novo pathway; UMP from orotate: step 1/2. Catalyzes the transfer of a ribosyl phosphate group from 5-phosphoribose 1-diphosphate to orotate, leading to the formation of orotidine monophosphate (OMP). This is Orotate phosphoribosyltransferase from Erythrobacter litoralis (strain HTCC2594).